Reading from the N-terminus, the 298-residue chain is Ethanolamine ammonia-lyase small subunit (298 aa).

A targets protein to the BMC region spans residues 1–19 (MDQKQIEEIVRSVMASMGQ). Val-210, Glu-231, and Cys-261 together coordinate adenosylcob(III)alamin.

The protein belongs to the EutC family. The basic unit is a heterodimer which dimerizes to form tetramers. The heterotetramers trimerize; 6 large subunits form a core ring with 6 small subunits projecting outwards. Interacts with EutS, which targets it to the interior of the BMC. Adenosylcob(III)alamin serves as cofactor.

It is found in the bacterial microcompartment. The catalysed reaction is ethanolamine = acetaldehyde + NH4(+). It participates in amine and polyamine degradation; ethanolamine degradation. Functionally, catalyzes the deamination of various vicinal amino-alcohols to oxo compounds. It is spontaneously inactivated by its substrate and reactivated by EutA. May play a role in bacterial microcompartment (BMC) assembly or maintenance. Directly targeted to the BMC. In terms of biological role, expression of the eut operon allows this bacteria to use ethanolamine (EA) as a carbon, nitrogen and energy source. It relies on cobalamin (vitamin B12) both as a cofactor for the ethanolamine ammonia-lyase activity and to induce the operon. EA enhances bacterial survival in macrophages in a concentration-dependent manner, suggesting it is an important nutrient during infection. The sequence is that of Ethanolamine ammonia-lyase small subunit from Salmonella typhimurium (strain LT2 / SGSC1412 / ATCC 700720).